We begin with the raw amino-acid sequence, 44 residues long: Relaxin (44 aa).

Q1 bears the Pyrrolidone carboxylic acid mark. 3 cysteine pairs are disulfide-bonded: C3–C31, C15–C44, and C30–C35.

Belongs to the insulin family. In terms of assembly, heterodimer of a B chain and an A chain linked by two disulfide bonds.

It localises to the secreted. The protein is Relaxin of Carcharias taurus (Sand tiger shark).